The chain runs to 457 residues: Carboxypeptidase N catalytic chain (457 aa).

Residues 1 to 23 form the signal peptide; the sequence is MPDLPSAFLPLLLLSKFVTPVTF. One can recognise a Peptidase M14 domain in the interval 24–338; that stretch reads RHHRYDDLVR…EALIQFLEQV (315 aa). C42 and C104 are oxidised to a cystine. Positions 86, 89, and 216 each coordinate Zn(2+). C271 and C311 form a disulfide bridge. E308 acts as the Proton donor/acceptor in catalysis. O-linked (GalNAc...) threonine glycans are attached at residues T400, T402, and T409. A disordered region spans residues 418 to 457; it reads SSSQVYPVQRAPGRGQGGRAKQPRTSRKKDPATKRHRGPA.

Belongs to the peptidase M14 family. In terms of assembly, tetramer of two catalytic chains and two glycosylated inactive chains. Requires Zn(2+) as cofactor. As to expression, mainly expressed in liver. Also detected in lung, stomach, intestine, spleen and kidney.

It localises to the secreted. It is found in the extracellular space. It catalyses the reaction Release of a C-terminal basic amino acid, preferentially lysine.. Protects the body from potent vasoactive and inflammatory peptides containing C-terminal Arg or Lys (such as kinins or anaphylatoxins) which are released into the circulation. The protein is Carboxypeptidase N catalytic chain (Cpn1) of Mus musculus (Mouse).